The primary structure comprises 211 residues: Large ribosomal subunit protein eL13 (211 aa).

The protein belongs to the eukaryotic ribosomal protein eL13 family. Component of the 60S large ribosomal subunit (LSU).

It localises to the cytoplasm. Functionally, component of the ribosome, a large ribonucleoprotein complex responsible for the synthesis of proteins in the cell. The small ribosomal subunit (SSU) binds messenger RNAs (mRNAs) and translates the encoded message by selecting cognate aminoacyl-transfer RNA (tRNA) molecules. The large subunit (LSU) contains the ribosomal catalytic site termed the peptidyl transferase center (PTC), which catalyzes the formation of peptide bonds, thereby polymerizing the amino acids delivered by tRNAs into a polypeptide chain. The nascent polypeptides leave the ribosome through a tunnel in the LSU and interact with protein factors that function in enzymatic processing, targeting, and the membrane insertion of nascent chains at the exit of the ribosomal tunnel. As part of the LSU, it is probably required for its formation and the maturation of rRNAs. The polypeptide is Large ribosomal subunit protein eL13 (RPL13) (Gallus gallus (Chicken)).